A 321-amino-acid polypeptide reads, in one-letter code: Glycerol-3-phosphate phosphatase (321 aa).

Asp-34 serves as the catalytic Nucleophile. 3 residues coordinate Mg(2+): Asp-34, Asp-36, and Asp-260. Asp-36 (proton donor) is an active-site residue.

This sequence belongs to the HAD-like hydrolase superfamily. CbbY/CbbZ/Gph/YieH family. In terms of assembly, homodimer. Requires Mg(2+) as cofactor. As to expression, ubiquitously expressed with higher expression in testis, heart, skeletal muscle and islet tissue (at protein level).

The catalysed reaction is O-phospho-L-tyrosyl-[protein] + H2O = L-tyrosyl-[protein] + phosphate. It carries out the reaction sn-glycerol 1-phosphate + H2O = glycerol + phosphate. The enzyme catalyses sn-glycerol 3-phosphate + H2O = glycerol + phosphate. With respect to regulation, inhibited by orthovanadate, beryllium trifluoride, Ca(2+) and EDTA. Glycerol-3-phosphate phosphatase hydrolyzing glycerol-3-phosphate into glycerol. Thereby, regulates the cellular levels of glycerol-3-phosphate a metabolic intermediate of glucose, lipid and energy metabolism. Was also shown to have a 2-phosphoglycolate phosphatase activity and a tyrosine-protein phosphatase activity. However, their physiological relevance is unclear. In vitro, also has a phosphatase activity toward ADP, ATP, GDP and GTP. The sequence is that of Glycerol-3-phosphate phosphatase from Mus musculus (Mouse).